A 250-amino-acid chain; its full sequence is Bacteriorhodopsin (250 aa).

The Extracellular segment spans residues 1-18 (MCCAALAPPMAATVGPES). The helical transmembrane segment at 19–37 (IWLWIGTIGMTLGTLYFVG) threads the bilayer. Residues 38-51 (RGRGVRDRKMQEFY) lie on the Cytoplasmic side of the membrane. A helical transmembrane segment spans residues 52–70 (IITIFITTIAAAMYFAMAT). The Extracellular segment spans residues 71-86 (GFGVTEVMVGDEALTI). The chain crosses the membrane as a helical span at residues 87-104 (YWARYADWLFTTPLLLLD). Over 105-115 (LSLLAGANRNT) the chain is Cytoplasmic. Residues 116–135 (IATLIGLDVFMIGTGAIAAL) traverse the membrane as a helical segment. The Extracellular segment spans residues 136–142 (SSTPGTR). The chain crosses the membrane as a helical span at residues 143–162 (IAWWAISTGALLALLYVLVG). The Cytoplasmic segment spans residues 163-180 (TLSENARNRAPEVASLFG). A helical membrane pass occupies residues 181 to 199 (RLRNLVIALWFLYPVVWIL). Topologically, residues 200 to 212 (GTEGTFGILPLYW) are extracellular. A helical membrane pass occupies residues 213-232 (ETAAFMVLDLSAKVGFGVIL). Residue K225 is modified to N6-(retinylidene)lysine. Residues 233–250 (LQSRSVLERVATPTAAPT) are Cytoplasmic-facing.

It belongs to the archaeal/bacterial/fungal opsin family.

The protein resides in the cell membrane. Light-driven proton pump. The chain is Bacteriorhodopsin (bop) from Haloterrigena sp. (strain arg-4).